Consider the following 429-residue polypeptide: Putative GMP synthase [glutamine-hydrolyzing] (429 aa).

The region spanning 10 to 118 (TIFILDFGSQ…GYTPIHLYPC (109 aa)) is the Glutamine amidotransferase type-1 domain. Cys87 functions as the Nucleophile in the catalytic mechanism. The 186-residue stretch at 119–304 (ELFKHIVDCE…LGLSSYLLDR (186 aa)) folds into the GMPS ATP-PPase domain. Active-site residues include His176 and Glu178.

In terms of assembly, homodimer.

It carries out the reaction XMP + L-glutamine + ATP + H2O = GMP + L-glutamate + AMP + diphosphate + 2 H(+). It functions in the pathway purine metabolism; GMP biosynthesis; GMP from XMP (L-Gln route): step 1/1. In terms of biological role, catalyzes the synthesis of GMP from XMP. The polypeptide is Putative GMP synthase [glutamine-hydrolyzing] (guaA) (Chlamydia pneumoniae (Chlamydophila pneumoniae)).